The sequence spans 574 residues: Protein misato (574 aa).

Belongs to the misato family.

The protein localises to the mitochondrion. In Drosophila melanogaster (Fruit fly), this protein is Protein misato (mst).